The primary structure comprises 171 residues: Endoribonuclease YbeY (171 aa).

His-126, His-130, and His-136 together coordinate Zn(2+).

Belongs to the endoribonuclease YbeY family. Zn(2+) serves as cofactor.

Its subcellular location is the cytoplasm. In terms of biological role, single strand-specific metallo-endoribonuclease involved in late-stage 70S ribosome quality control and in maturation of the 3' terminus of the 16S rRNA. In Rhizobium etli (strain CIAT 652), this protein is Endoribonuclease YbeY.